The chain runs to 49 residues: Multidrug efflux pump accessory protein AcrZ (49 aa).

Residues 1 to 7 (MLELLKS) are Periplasmic-facing. The chain crosses the membrane as a helical span at residues 8–28 (LVFAVIMVPVVMAIILGLIYG). The Cytoplasmic portion of the chain corresponds to 29–49 (LGEVFNIFSGVGKKDQPGQNH).

It belongs to the AcrZ family. As to quaternary structure, part of the AcrA-AcrB-AcrZ-TolC efflux pump, interacts directly with AcrB.

Its subcellular location is the cell inner membrane. Its function is as follows. AcrA-AcrB-AcrZ-TolC is a drug efflux protein complex with a broad substrate specificity. This protein binds to AcrB and is required for efflux of some but not all substrates, suggesting it may influence the specificity of drug export. This Escherichia coli O157:H7 protein is Multidrug efflux pump accessory protein AcrZ.